We begin with the raw amino-acid sequence, 49 residues long: uncharacterized protein (49 aa).

Residues methionine 1 to methionine 22 form the signal peptide.

The protein localises to the secreted. This is an uncharacterized protein from Dictyostelium discoideum (Social amoeba).